A 361-amino-acid chain; its full sequence is Free fatty acid receptor 4 (361 aa).

At 1–45 the chain is on the extracellular side; that stretch reads MSPECARAAGDAPLRSLEQANRTRFPFFSDVKGDHRLVLAAVETT. An N-linked (GlcNAc...) asparagine glycan is attached at asparagine 21. Residues 46–66 traverse the membrane as a helical segment; sequence VLVLIFAVSLLGNVCALVLVA. Residues 67 to 77 lie on the Cytoplasmic side of the membrane; it reads RRRRRGATACL. Residues 78–98 form a helical membrane-spanning segment; it reads VLNLFCADLLFISAIPLVLAV. The Extracellular portion of the chain corresponds to 99–112; the sequence is RWTEAWLLGPVACH. Cysteine 111 and cysteine 194 are disulfide-bonded. Residues 113-133 form a helical membrane-spanning segment; sequence LLFYVMTLSGSVTILTLAAVS. Residues 134-156 are Cytoplasmic-facing; that stretch reads LERMVCIVHLQRGVRGPGRRARA. A helical membrane pass occupies residues 157–177; it reads VLLALIWGYSAVAALPLCVFF. Residues 178 to 204 are Extracellular-facing; sequence RVVPQRLPGADQEISICTLIWPTIPGE. Residues 205–225 form a helical membrane-spanning segment; it reads ISWDVSFVTLNFLVPGLVIVI. Residues 226–268 are Cytoplasmic-facing; it reads SYSKILQITKASRKRLTVSLAYSESHQIRVSQQDFRLFRTLFL. A helical transmembrane segment spans residues 269–289; it reads LMVSFFIMWSPIIITILLILI. Residues 290 to 295 are Extracellular-facing; the sequence is QNFKQD. The helical transmembrane segment at 296–316 threads the bilayer; sequence LVIWPSLFFWVVAFTFANSAL. Over 317–361 the chain is Cytoplasmic; the sequence is NPILYNMTLCRNEWKKIFCCFWFPEKGAILTDTSVKRNDLSIISG. Phosphothreonine occurs at positions 347 and 349. Serine 350, serine 357, and serine 360 each carry phosphoserine.

It belongs to the G-protein coupled receptor 1 family. In terms of assembly, interacts (via C-terminus) with ARRB2 following LCFAs stimulation. Phosphorylated at two clusters of Ser and Thr residues located in the intracellular C-terminus, a prerequisite for FFAR4 internalization via an ARRB2-dependent pathway. In terms of tissue distribution, the predominant isoform in human tissues. Expressed in adipose tissue, pancreatic islets, lung and brain. Expressed in alpha cells of pancreatic islets. Expressed in primary cilia of perivascular preadipocytes of white adipose tissue (at protein level). As to expression, abundant expression in the intestinal tract. Expressed in colonic intraepithelial neuroendocrine cells.

The protein localises to the cell membrane. Its subcellular location is the endosome membrane. It is found in the lysosome membrane. It localises to the cell projection. The protein resides in the cilium membrane. Functionally, G-protein-coupled receptor for long-chain fatty acids (LCFAs) with a major role in adipogenesis, energy metabolism and inflammation. Signals via G-protein and beta-arrestin pathways. LCFAs sensing initiates activation of phosphoinositidase C-linked G proteins GNAQ and GNA11 (G(q)/G(11)), inducing a variety of cellular responses via second messenger pathways such as intracellular calcium mobilization, modulation of cyclic adenosine monophosphate (cAMP) production, and mitogen-activated protein kinases (MAPKs). After LCFAs binding, associates with beta-arrestin ARRB2 that acts as an adapter protein coupling the receptor to specific downstream signaling pathways, as well as mediating receptor endocytosis. In response to dietary fats, plays an important role in the regulation of adipocyte proliferation and differentiation. Acts as a receptor for omega-3 polyunsaturated fatty acids (PUFAs) at primary cilium of perivascular preadipocytes, initiating an adipogenic program via cAMP and CTCF-dependent chromatin remodeling that ultimately results in transcriptional activation of adipogenic genes and cell cycle entry. Induces differentiation of brown adipocytes probably via autocrine and endocrine functions of FGF21 hormone. Activates brown adipocytes by initiating intracellular calcium signaling that leads to mitochondrial depolarization and fission, and overall increased mitochondrial respiration. Consequently stimulates fatty acid uptake and oxidation in mitochondria together with UCP1-mediated thermogenic respiration, eventually reducing fat mass. Regulates bi-potential differentiation of bone marrow mesenchymal stem cells toward osteoblasts or adipocytes likely by up-regulating distinct integrins. In response to dietary fats regulates hormone secretion and appetite. Stimulates GIP and GLP1 secretion from enteroendocrine cells as well as GCG secretion in pancreatic alpha cells, thereby playing a role in the regulation of blood glucose levels. Negatively regulates glucose-induced SST secretion in pancreatic delta cells. Mediates LCFAs inhibition of GHRL secretion, an appetite-controlling hormone. In taste buds, contributes to sensing of dietary fatty acids by the gustatory system. During the inflammatory response, promotes anti-inflammatory M2 macrophage differentiation in adipose tissue. Mediates the anti-inflammatory effects of omega-3 PUFAs via inhibition of NLRP3 inflammasome activation. In this pathway, interacts with adapter protein ARRB2 and inhibits the priming step triggered by Toll-like receptors (TLRs) at the level of TAK1 and TAB1. Further inhibits the activation step when ARRB2 directly associates with NLRP3, leading to inhibition of pro-inflammatory cytokine release. Mediates LCFAs anti-apoptotic effects. In terms of biological role, receptor for LCFAs decoupled from G-protein signaling. May signal through beta-arrestin pathway. After LCFAs binding, associates with beta-arrestin ARRB2 that may act as an adapter protein coupling the receptor to specific downstream signaling pathways, as well as mediating receptor endocytosis. The sequence is that of Free fatty acid receptor 4 from Homo sapiens (Human).